The primary structure comprises 563 residues: Lengsin (563 aa).

Positions 1 to 115 (MTDEGDLAQE…PNTDPTRYNA (115 aa)) are disordered. Residues 26 to 37 (SKLRRARRKVTK) are compositionally biased toward basic residues. 2 stretches are compositionally biased toward polar residues: residues 51–62 (ANSSEMSRNQIA) and 105–115 (SPNTDPTRYNA). In terms of domain architecture, GS beta-grasp spans 137–231 (NHLQFVRFEA…VICDTFTVTG (95 aa)). Residues 238-563 (PRYIAKRQLR…EGNKFLEYFI (326 aa)) form the GS catalytic domain.

This sequence belongs to the glutamine synthetase family. As to quaternary structure, dodecamer. Interacts with BFSP2 and VIM. As to expression, expressed in lens.

Its function is as follows. May act as a component of the cytoskeleton or as a chaperone for the reorganization of intermediate filament proteins during terminal differentiation in the lens. Does not seem to have enzymatic activity. This is Lengsin (Lgsn) from Mus musculus (Mouse).